The following is a 580-amino-acid chain: Efflux pump dotC (580 aa).

The segment covering 1–34 has biased composition (basic and acidic residues); the sequence is MSEDHTKADNLSEKDPHSPERSDSSSHEDAHARE. A disordered region spans residues 1–45; sequence MSEDHTKADNLSEKDPHSPERSDSSSHEDAHAREEEESSDDDGAL. Residue N10 is glycosylated (N-linked (GlcNAc...) asparagine). Residues 35–44 are compositionally biased toward acidic residues; it reads EEESSDDDGA. The helical transmembrane segment at 49-69 threads the bilayer; sequence PASLIAIVMIALSLAVFLSAL. An N-linked (GlcNAc...) asparagine glycan is attached at N86. A run of 13 helical transmembrane segments spans residues 89–109, 127–147, 153–173, 181–201, 209–229, 242–262, 275–295, 318–338, 348–368, 380–400, 409–429, 444–466, and 519–539; these read AAYT…TPIW, ALFM…MLIT, GAAG…LFSL, GMIG…GGAF, WCFY…FFFL, FAAI…MFLF, SATV…FGLV, ALLV…YLPL, PILA…SAAA, LIPM…LINF, LIIY…APLV, TATF…QVLY, and SPMW…ILLV. The interval 559–580 is disordered; sequence KKAEAERKAERQAKDLEKAQKS.

The protein belongs to the major facilitator superfamily. TCR/Tet family.

The protein resides in the cell membrane. It is found in the vacuole membrane. Functionally, efflux pump; part of the gene cluster that mediates the biosynthesis of dothistromin (DOTH), a polyketide toxin very similar in structure to the aflatoxin precursor, versicolorin B. One function of dotC may be to transport early-stage dothistromin biosynthetic intermediates from the cytoplasm into vacuoles, thereby affecting the rate of dothistromin production. The sequence is that of Efflux pump dotC from Dothistroma septosporum (strain NZE10 / CBS 128990) (Red band needle blight fungus).